We begin with the raw amino-acid sequence, 334 residues long: MSEPIRVLVTGAAGQIAYSLLYSIGNGSVFGKDQPIILVLLDITPMMGVLDGVLMELQDCALPLLKDVIATDKEEIAFKDLDVAILVGSMPRRDGMERKDLLKANVKIFKCQGAALDKYAKKSVKVIVVGNPANTNCLTASKSAPSIPKENFSCLTRLDHNRAKAQIALKLGVTSDDVKNVIIWGNHSSTQYPDVNHAKVKLQGKEVGVYEALKDDSWLKGEFITTVQQRGAAVIKARKLSSAMSAAKAICDHVRDIWFGTPEGEFVSMGIISDGNSYGIPDDLLYSFPVTIKDKTWKVVEGLPINDFSREKMDLTAKELAEEKETAFEFLASA.

Ser-2 bears the N-acetylserine mark. NAD(+)-binding positions include 11-17 and Asp-42; that span reads GAAGQIA. Substrate contacts are provided by Arg-92 and Arg-98. Asn-105 is an NAD(+) binding site. Lys-110 carries the N6-succinyllysine modification. Position 112 (Gln-112) interacts with NAD(+). An N6-acetyllysine mark is found at Lys-118 and Lys-121. 129–131 serves as a coordination point for NAD(+); sequence VGN. Substrate-binding residues include Asn-131 and Arg-162. The active-site Proton acceptor is His-187. Lys-214 is subject to N6-succinyllysine. Ser-217 is modified (phosphoserine). At Arg-230 the chain carries Omega-N-methylarginine. Phosphoserine is present on Ser-241. Lys-298 bears the N6-acetyllysine; alternate mark. N6-succinyllysine; alternate is present on Lys-298. Position 309 is a phosphoserine (Ser-309). Lys-318 is subject to N6-succinyllysine. Ser-333 carries the post-translational modification Phosphoserine.

This sequence belongs to the LDH/MDH superfamily. MDH type 2 family. As to quaternary structure, homodimer. In terms of processing, ISGylated. Post-translationally, acetylation at Lys-118 dramatically enhances enzymatic activity and promotes adipogenic differentiation.

Its subcellular location is the cytoplasm. The protein resides in the cytosol. It carries out the reaction (S)-malate + NAD(+) = oxaloacetate + NADH + H(+). It catalyses the reaction (2R)-2-hydroxy-3-(4-hydroxyphenyl)propanoate + NAD(+) = 3-(4-hydroxyphenyl)pyruvate + NADH + H(+). The enzyme catalyses (S)-2-hydroxyglutarate + NAD(+) = 2-oxoglutarate + NADH + H(+). In terms of biological role, catalyzes the reduction of aromatic alpha-keto acids in the presence of NADH. Plays essential roles in the malate-aspartate shuttle and the tricarboxylic acid cycle, important in mitochondrial NADH supply for oxidative phosphorylation. Catalyzes the reduction of 2-oxoglutarate to 2-hydroxyglutarate, leading to elevated reactive oxygen species (ROS). In Bos taurus (Bovine), this protein is Malate dehydrogenase, cytoplasmic (MDH1).